Reading from the N-terminus, the 116-residue chain is ATP synthase lipid-binding protein, mitochondrial (116 aa).

The N-terminal 24 residues, 1–24, are a transit peptide targeting the mitochondrion; the sequence is MYCQRLALPLTRSLLASRAPLALR. The chain crosses the membrane as a helical span at residues 57 to 77; the sequence is VGVAGSGAGIGNVFGALVIGY. N6,N6,N6-trimethyllysine is present on lysine 84. Residues 92 to 112 form a helical membrane-spanning segment; sequence ILGFALSEAMGLFCLTMGFMI.

This sequence belongs to the ATPase C chain family. In terms of assembly, F-type ATPases have 2 components, CF(1) - the catalytic core - and CF(0) - the membrane proton channel. CF(1) has five subunits: alpha(3), beta(3), gamma(1), delta(1), epsilon(1). CF(0) has three main subunits: a, b and c. In terms of processing, trimethylated by ATPSCKMT at Lys-84. Methylation may be required for proper incorporation of the C subunit into the ATP synthase complex and mitochondrial respiration.

The protein localises to the mitochondrion membrane. Its function is as follows. Mitochondrial membrane ATP synthase (F(1)F(0) ATP synthase or Complex V) produces ATP from ADP in the presence of a proton gradient across the membrane which is generated by electron transport complexes of the respiratory chain. F-type ATPases consist of two structural domains, F(1) - containing the extramembraneous catalytic core and F(0) - containing the membrane proton channel, linked together by a central stalk and a peripheral stalk. During catalysis, ATP synthesis in the catalytic domain of F(1) is coupled via a rotary mechanism of the central stalk subunits to proton translocation. Part of the complex F(0) domain. A homomeric c-ring of probably 10 subunits is part of the complex rotary element. In Caenorhabditis briggsae, this protein is ATP synthase lipid-binding protein, mitochondrial.